A 688-amino-acid polypeptide reads, in one-letter code: UvrABC system protein B (688 aa).

One can recognise a Helicase ATP-binding domain in the interval 31–188 (GRVNAGEPDV…RKFVSMQYQR (158 aa)). Residue 44 to 51 (GATGTGKS) participates in ATP binding. Residues 97–120 (YYDYYQPEAYVPQTDTFIEKDSSV) carry the Beta-hairpin motif. Positions 434–587 (QIDDLLEQIR…QVAYNTEHGI (154 aa)) constitute a Helicase C-terminal domain. The tract at residues 607 to 632 (GEDTKKMLEGRGGGKRSPTPNLRREG) is disordered. A UVR domain is found at 642 to 677 (ETIISDLNDQMLQAAGELKFELAARLRDELGDLKRE).

Belongs to the UvrB family. Forms a heterotetramer with UvrA during the search for lesions. Interacts with UvrC in an incision complex.

Its subcellular location is the cytoplasm. The UvrABC repair system catalyzes the recognition and processing of DNA lesions. A damage recognition complex composed of 2 UvrA and 2 UvrB subunits scans DNA for abnormalities. Upon binding of the UvrA(2)B(2) complex to a putative damaged site, the DNA wraps around one UvrB monomer. DNA wrap is dependent on ATP binding by UvrB and probably causes local melting of the DNA helix, facilitating insertion of UvrB beta-hairpin between the DNA strands. Then UvrB probes one DNA strand for the presence of a lesion. If a lesion is found the UvrA subunits dissociate and the UvrB-DNA preincision complex is formed. This complex is subsequently bound by UvrC and the second UvrB is released. If no lesion is found, the DNA wraps around the other UvrB subunit that will check the other stand for damage. The sequence is that of UvrABC system protein B from Clavibacter michiganensis subsp. michiganensis (strain NCPPB 382).